A 184-amino-acid polypeptide reads, in one-letter code: Inactive cytochrome P450 monooxygenase lolP2 (184 aa).

Residues 10–30 (GIVWLTVAAIAISYILQSSFL) traverse the membrane as a helical segment. The tract at residues 161–184 (RRTRGSRPRSRPRWMPARWSRSSP) is disordered. A compositionally biased stretch (basic residues) spans 163 to 172 (TRGSRPRSRP). Over residues 173–184 (RWMPARWSRSSP) the composition is skewed to low complexity.

The protein belongs to the cytochrome P450 family.

It is found in the membrane. Cytochrome P450 monooxygenase; part of the gene cluster that mediates the biosynthesis of loline alkaloids, potent insecticidal agents composed of a pyrrolizidine ring system and an uncommon ether bridge linking carbons 2 and 7. Lolines are structurally differentiated by the various modifications of the L-amino group and include norloline, loline, N-methylloline, N-acetylloline, N-acetylnorloline, and N-formylloline. The first committed step is the condensation of O-acetyl-L-homoserine (derived from L-aspartic acid) and L-proline, probably catalyzed by the gamma-type pyridoxal 5'-phosphate(PLP)-dependent enzyme lolC, to give the diamino diacid, NACPP. Ensuing cyclization, decarboxylation, and acetylation steps yield 1-exo-acetamidopyrrolizidine (AcAP). LolO is required for installation of the ether bridge upon the pathway intermediate, 1-exo-acetamidopyrrolizidine (AcAP). In sequential 2-oxoglutarate- and O(2)-consuming steps, lolO removes hydrogens from C2 and C7 of AcAP to form both carbon-oxygen bonds in N-acetylnorloline (NANL), the precursor to all other lolines. The enzymes lolD, lolE, lolF and lolT have also been proposed to be involved in the ether-bridge installation. Further processing of the exocyclic moiety of NANL by fungal N-acetamidase (LolN), methyltransferase (LolM), and cytochrome P450 (LolP) enzymes, with occasional involvement of a plant acetyltransferase, generates the other known lolines. LolN transforms NANL to norlonine which is monomethylated and dimethylated to respectively lonine and N-methyllonine (NML) by lolM. LolP catalyzes hydroxylation of the methyl group in N-methylloline (NML) and further oxygenation to N-formylloline (NFL). A plant acetyltransferase is responsible for the acetylation of loline to form N-acetylloline (NAL). LolA might interact with aspartate kinase to prevent feedback inhibition of its activity by these end products and thereby promote production of L-homoserine from L-aspartate. The polypeptide is Inactive cytochrome P450 monooxygenase lolP2 (Epichloe uncinata (Endophyte fungus)).